Consider the following 106-residue polypeptide: Large ribosomal subunit protein P1A (106 aa).

The interval Ala74 to Asp106 is disordered. Positions Glu82 to Met100 are enriched in acidic residues.

It belongs to the eukaryotic ribosomal protein P1/P2 family. As to quaternary structure, component of the large ribosomal subunit (LSU). Mature ribosomes consist of a small (40S) and a large (60S) subunit. The 40S subunit contains about 32 different proteins and 1 molecule of RNA (18S). The 60S subunit contains 45 different proteins and 3 molecules of RNA (25S, 5.8S and 5S). The 5 acidic ribosomal P-proteins form the stalk structure of the 60S subunit. They are organized as a pentameric complex in which uL10/P0 interacts with 2 heterodimers, P1A-P2B and P1B-P2A. Post-translationally, phosphorylated.

Its subcellular location is the cytoplasm. Component of the ribosome, a large ribonucleoprotein complex responsible for the synthesis of proteins in the cell. The small ribosomal subunit (SSU) binds messenger RNAs (mRNAs) and translates the encoded message by selecting cognate aminoacyl-transfer RNA (tRNA) molecules. The large subunit (LSU) contains the ribosomal catalytic site termed the peptidyl transferase center (PTC), which catalyzes the formation of peptide bonds, thereby polymerizing the amino acids delivered by tRNAs into a polypeptide chain. The nascent polypeptides leave the ribosome through a tunnel in the LSU and interact with protein factors that function in enzymatic processing, targeting, and the membrane insertion of nascent chains at the exit of the ribosomal tunnel. This is Large ribosomal subunit protein P1A (RPP1A) from Candida albicans (strain SC5314 / ATCC MYA-2876) (Yeast).